Consider the following 362-residue polypeptide: E3 ubiquitin-protein ligase TM129 (362 aa).

At 1–6 (MESPAV) the chain is on the lumenal side. Residues 7-27 (TFTLAYVVFSVCFVFTPNEFH) form a helical membrane-spanning segment. Topologically, residues 28-56 (SAGITVQNLLSGWLGSEDVAFVHYHIRRS) are cytoplasmic. A helical membrane pass occupies residues 57 to 77 (SATLLAHSLLPMGYFIGMCFA). The Lumenal segment spans residues 78–94 (APEKELYNVHKAADGWK). A helical membrane pass occupies residues 95–115 (VFVLMAVLLPIATSILAFYWS). Topologically, residues 116 to 362 (QKRWSNHPLA…FCIVDVCIVR (247 aa)) are cytoplasmic. Residues 285 to 350 (CIGCMQTNAN…SSQVPCPTCR (66 aa)) form an RING-type; degenerate zinc finger.

The protein belongs to the TMEM129 family. In terms of assembly, integral component of ER-resident dislocation complexes.

It is found in the endoplasmic reticulum membrane. The enzyme catalyses S-ubiquitinyl-[E2 ubiquitin-conjugating enzyme]-L-cysteine + [acceptor protein]-L-lysine = [E2 ubiquitin-conjugating enzyme]-L-cysteine + N(6)-ubiquitinyl-[acceptor protein]-L-lysine.. Its pathway is protein modification; protein ubiquitination. E3 ubiquitin-protein ligase involved in ER-associated protein degradation, preferentially associates with the E2 enzyme UBE2J2. The protein is E3 ubiquitin-protein ligase TM129 (tmem129) of Xenopus laevis (African clawed frog).